Reading from the N-terminus, the 328-residue chain is Stress response kinase A (328 aa).

The active-site Proton acceptor is D201. Residues N206 and D217 each coordinate Mg(2+). D217 is a catalytic residue.

This sequence belongs to the SrkA/RdoA protein kinase family. As to quaternary structure, monomer. The cofactor is Mg(2+).

It is found in the cytoplasm. The enzyme catalyses L-seryl-[protein] + ATP = O-phospho-L-seryl-[protein] + ADP + H(+). It catalyses the reaction L-threonyl-[protein] + ATP = O-phospho-L-threonyl-[protein] + ADP + H(+). In terms of biological role, a protein kinase that phosphorylates Ser and Thr residues. Probably acts to suppress the effects of stress linked to accumulation of reactive oxygen species. Probably involved in the extracytoplasmic stress response. The chain is Stress response kinase A from Escherichia coli O157:H7.